The primary structure comprises 429 residues: S-adenosylmethionine synthase (429 aa).

His14 contributes to the ATP binding site. Mg(2+) is bound at residue Asp16. Residue Glu42 participates in K(+) binding. Residues Glu55 and Gln98 each coordinate L-methionine. A flexible loop region spans residues 98 to 108 (QSADINRGVDR). ATP is bound by residues 165–167 (DAK), 252–253 (KF), Asp261, 267–268 (RK), Ala284, and Lys288. An L-methionine-binding site is contributed by Asp261. Lys292 contacts L-methionine.

This sequence belongs to the AdoMet synthase family. Homotetramer; dimer of dimers. It depends on Mg(2+) as a cofactor. The cofactor is K(+).

The protein localises to the cytoplasm. It catalyses the reaction L-methionine + ATP + H2O = S-adenosyl-L-methionine + phosphate + diphosphate. Its pathway is amino-acid biosynthesis; S-adenosyl-L-methionine biosynthesis; S-adenosyl-L-methionine from L-methionine: step 1/1. Its function is as follows. Catalyzes the formation of S-adenosylmethionine (AdoMet) from methionine and ATP. The overall synthetic reaction is composed of two sequential steps, AdoMet formation and the subsequent tripolyphosphate hydrolysis which occurs prior to release of AdoMet from the enzyme. The protein is S-adenosylmethionine synthase of Porphyromonas gingivalis (strain ATCC 33277 / DSM 20709 / CIP 103683 / JCM 12257 / NCTC 11834 / 2561).